Reading from the N-terminus, the 480-residue chain is ATP synthase subunit beta (480 aa).

Residue 166-173 (GGAGVGKT) coordinates ATP.

Belongs to the ATPase alpha/beta chains family. As to quaternary structure, F-type ATPases have 2 components, CF(1) - the catalytic core - and CF(0) - the membrane proton channel. CF(1) has five subunits: alpha(3), beta(3), gamma(1), delta(1), epsilon(1). CF(0) has three main subunits: a(1), b(2) and c(9-12). The alpha and beta chains form an alternating ring which encloses part of the gamma chain. CF(1) is attached to CF(0) by a central stalk formed by the gamma and epsilon chains, while a peripheral stalk is formed by the delta and b chains.

Its subcellular location is the cell membrane. The catalysed reaction is ATP + H2O + 4 H(+)(in) = ADP + phosphate + 5 H(+)(out). Produces ATP from ADP in the presence of a proton gradient across the membrane. The catalytic sites are hosted primarily by the beta subunits. The polypeptide is ATP synthase subunit beta (Streptomyces griseus subsp. griseus (strain JCM 4626 / CBS 651.72 / NBRC 13350 / KCC S-0626 / ISP 5235)).